The chain runs to 466 residues: Glutamate decarboxylase alpha (466 aa).

The substrate site is built by T62 and N83. Residues 126–127 (SS), T212, and H275 each bind pyridoxal 5'-phosphate. K276 carries the post-translational modification N6-(pyridoxal phosphate)lysine.

This sequence belongs to the group II decarboxylase family. As to quaternary structure, homohexamer. It depends on pyridoxal 5'-phosphate as a cofactor.

It carries out the reaction L-glutamate + H(+) = 4-aminobutanoate + CO2. Functionally, converts glutamate to gamma-aminobutyrate (GABA), consuming one intracellular proton in the reaction. The gad system helps to maintain a near-neutral intracellular pH when cells are exposed to extremely acidic conditions. The ability to survive transit through the acidic conditions of the stomach is essential for successful colonization of the mammalian host by commensal and pathogenic bacteria. This is Glutamate decarboxylase alpha (gadA) from Escherichia coli O6:H1 (strain CFT073 / ATCC 700928 / UPEC).